The following is an 87-amino-acid chain: MKTKLNELLEFPCEFTYKVMGLAQPELVDQVVEVVQRHAPGDYTPQVKPSSKGNYHSVSITINATHIEQVETLYEELGNIEIVRMVL.

This sequence belongs to the UPF0250 family.

This chain is UPF0250 protein NT01EI_2946, found in Edwardsiella ictaluri (strain 93-146).